The following is a 404-amino-acid chain: MREAPHVLGIVLAGGEGKRLYPLTADRAKPAVPFGGAYRLIDFVLSNLVNARYLRICVLTQYKSHSLDRHISQNWRLSGLAGEYITPVPAQQRLGPRWYTGSADAIYQSLNLIYDEDPDYIVVFGADHVYRMDPEQMVRLHIDSGAGATVAGIRVPRSEATAFGCIDSDESGRIRKFVEKPLDPPGTPDDPETTFVSMGNYIFTTKVLIDAIRADADDDHSDHDMGGDIIPRLVDDGMAAVYDFSDNEVPGATDRDRGYWRDVGTLDAFYDAHMDLVSVHPVFNLYNKRWPIRGESENLAPAKFVNGGSAQESVVGAGSIISAASVRNSVLSSNVVVDDGAIVEGSVIMPGARVGRGAVVRHAILDKNVVVGPGEMVGVDLERDRERFAISAGGVVAVGKGVWI.

Alpha-D-glucose 1-phosphate contacts are provided by residues Tyr-99, Gly-164, 179-180, and Ser-197; that span reads EK.

Belongs to the bacterial/plant glucose-1-phosphate adenylyltransferase family.

The catalysed reaction is alpha-D-glucose 1-phosphate + ATP + H(+) = ADP-alpha-D-glucose + diphosphate. It functions in the pathway capsule biogenesis; capsule polysaccharide biosynthesis. It participates in glycan biosynthesis; glycogen biosynthesis. Functionally, involved in the biosynthesis of ADP-glucose, a building block, required in the biosynthesis of maltose-1-phosphate (M1P) and in the elongation reactions to produce linear alpha-1,4-glucans. Catalyzes the reaction between ATP and alpha-D-glucose 1-phosphate (G1P) to produce pyrophosphate and ADP-Glc. This Mycolicibacterium paratuberculosis (strain ATCC BAA-968 / K-10) (Mycobacterium paratuberculosis) protein is Glucose-1-phosphate adenylyltransferase.